Consider the following 400-residue polypeptide: MPAFKTLDDLTDIAGKRVLLRVDLNVPVSGGKVTDATRIERVAPTIKELSAKGAKVILLAHFGRPKGEPVADMSLSQIISAVEEVLDQAVAFGEDCVGEPAERAVAALNNGDILLLENTRFHKGEEKNDADFTAELAKNGDIYVNDAFSAAHRAHASTEGLAHILPAYAGRTMQAELEALEKGLGKPTHPVVAIVGGAKVSSKIDLLMNLVKKVDALVIGGGMANTFIAAQGIDVGKSLCEHDLAATAKQIMIEAETAGCTIVLPVDGVVAREFKANAANETVSVSAIPADAMMLDVGPKSVAVVNDWITKAATLVWNGPLGAFEIPPFDTATVSAAKHAAERSKAGKLVSVAGGGDTVSALNHAGVVDDFSYVSTAGGAFLEWMEGKELPGVAVLTRPA.

Substrate is bound by residues 23-25 (DLN), R38, 61-64 (HFGR), R120, and R153. Residues K203, E325, and 355–358 (GGDT) each bind ATP.

It belongs to the phosphoglycerate kinase family. Monomer.

The protein localises to the cytoplasm. The enzyme catalyses (2R)-3-phosphoglycerate + ATP = (2R)-3-phospho-glyceroyl phosphate + ADP. It participates in carbohydrate degradation; glycolysis; pyruvate from D-glyceraldehyde 3-phosphate: step 2/5. This is Phosphoglycerate kinase from Allorhizobium ampelinum (strain ATCC BAA-846 / DSM 112012 / S4) (Agrobacterium vitis (strain S4)).